The sequence spans 1894 residues: Plexin-A1 (1894 aa).

The N-terminal stretch at 1 to 27 (MPLPPLSSRTLLLLLLLLLRGVWIAIS) is a signal peptide. Residues 28–510 (SPPAGLGPQP…TEKQVTQVPV (483 aa)) enclose the Sema domain. Topologically, residues 28-1242 (SPPAGLGPQP…VYSDSLLTLP (1215 aa)) are extracellular. The N-linked (GlcNAc...) asparagine glycan is linked to Asn75. Disulfide bonds link Cys93–Cys102, Cys128–Cys136, Cys284–Cys405, Cys300–Cys356, Cys374–Cys393, Cys513–Cys530, Cys519–Cys561, Cys522–Cys539, Cys533–Cys545, and Cys596–Cys615. 3 N-linked (GlcNAc...) asparagine glycosylation sites follow: Asn658, Asn670, and Asn699. 4 consecutive IPT/TIG domains span residues 862-957 (PKIL…FTFV), 959-1043 (PTFY…YNYT), 1046-1145 (PTIL…FLYY), and 1148-1234 (PVLE…LQVY). Asn1041 carries an N-linked (GlcNAc...) asparagine glycan. Asn1185 and Asn1210 each carry an N-linked (GlcNAc...) asparagine glycan. The helical transmembrane segment at 1243–1263 (AIVGIGGGGGLLLLVIVAVLI) threads the bilayer. Positions 1262–1315 (LIAYKRKSRDADRTLKRLQLQMDNLESRVALECKEAFAELQTDIHELTSDLDGA) form a coiled coil. At 1264-1894 (AYKRKSRDAD…QVVDTMALSS (631 aa)) the chain is on the cytoplasmic side.

Belongs to the plexin family. Interacts directly with NRP1 and NRP2. Interacts with PLXN1B. Interacts with FARP2, RND1 and KDR/VEGFR2. Binding of SEMA3A leads to dissociation of FARP2. Interacts with CRMP1, DPYSL2/CRMP2, DPYSL3/CRMP3 and DPYSL4/CRMP4. Interacts (via TIG domains) with TREM2; the interaction mediates SEMA6D binding and signaling through TYROBP. As to expression, ubiquitous.

The protein localises to the cell membrane. Functionally, coreceptor for SEMA3A, SEMA3C, SEMA3F and SEMA6D. Necessary for signaling by class 3 semaphorins and subsequent remodeling of the cytoskeleton. Plays a role in axon guidance, invasive growth and cell migration. Class 3 semaphorins bind to a complex composed of a neuropilin and a plexin. The plexin modulates the affinity of the complex for specific semaphorins, and its cytoplasmic domain is required for the activation of down-stream signaling events in the cytoplasm. Acts as coreceptor of TREM2 for SEMA6D in dendritic cells and is involved in the generation of immune responses and skeletal homeostasis. This chain is Plexin-A1 (Plxna1), found in Mus musculus (Mouse).